Here is a 361-residue protein sequence, read N- to C-terminus: Mannonate dehydratase 1 (361 aa).

It belongs to the mannonate dehydratase family. Fe(2+) serves as cofactor. It depends on Mn(2+) as a cofactor.

The enzyme catalyses D-mannonate = 2-dehydro-3-deoxy-D-gluconate + H2O. It participates in carbohydrate metabolism; pentose and glucuronate interconversion. Its function is as follows. Catalyzes the dehydration of D-mannonate. This chain is Mannonate dehydratase 1 (uxuA1), found in Halalkalibacterium halodurans (strain ATCC BAA-125 / DSM 18197 / FERM 7344 / JCM 9153 / C-125) (Bacillus halodurans).